Reading from the N-terminus, the 349-residue chain is Selenide, water dikinase (349 aa).

The active site involves Sec19. A non-standard amino acid (selenocysteine) is located at residue Sec19. Residues Lys22 and 50-52 (LGD) each bind ATP. Mg(2+) is bound at residue Asp53. Residues Asp69, Asp92, and 140 to 142 (GHT) each bind ATP. Asp92 serves as a coordination point for Mg(2+). Position 246 (Asp246) interacts with Mg(2+).

This sequence belongs to the selenophosphate synthase 1 family. Class I subfamily. In terms of assembly, homodimer. Requires Mg(2+) as cofactor.

It catalyses the reaction hydrogenselenide + ATP + H2O = selenophosphate + AMP + phosphate + 2 H(+). In terms of biological role, synthesizes selenophosphate from selenide and ATP. The sequence is that of Selenide, water dikinase from Methanocaldococcus jannaschii (strain ATCC 43067 / DSM 2661 / JAL-1 / JCM 10045 / NBRC 100440) (Methanococcus jannaschii).